The primary structure comprises 164 residues: SsrA-binding protein (164 aa).

Positions 141–164 (KLHDKRQDEKQKSIKREINSALKR) are disordered. Positions 145–158 (KRQDEKQKSIKREI) are enriched in basic and acidic residues.

This sequence belongs to the SmpB family.

The protein resides in the cytoplasm. Required for rescue of stalled ribosomes mediated by trans-translation. Binds to transfer-messenger RNA (tmRNA), required for stable association of tmRNA with ribosomes. tmRNA and SmpB together mimic tRNA shape, replacing the anticodon stem-loop with SmpB. tmRNA is encoded by the ssrA gene; the 2 termini fold to resemble tRNA(Ala) and it encodes a 'tag peptide', a short internal open reading frame. During trans-translation Ala-aminoacylated tmRNA acts like a tRNA, entering the A-site of stalled ribosomes, displacing the stalled mRNA. The ribosome then switches to translate the ORF on the tmRNA; the nascent peptide is terminated with the 'tag peptide' encoded by the tmRNA and targeted for degradation. The ribosome is freed to recommence translation, which seems to be the essential function of trans-translation. This is SsrA-binding protein from Prochlorococcus marinus (strain MIT 9215).